Reading from the N-terminus, the 1145-residue chain is DNA polymerase subunit gamma-1, mitochondrial (1145 aa).

A mitochondrion-targeting transit peptide spans 1-9 (MQFHLIRKY).

The protein belongs to the DNA polymerase type-A family. Component of the DNA polymerase gamma complex consisting of two subunits: the catalytic subunit DNApol-gamma/DNApolG1 and the accessory subunit PolG2/DNApol-gamma35. Requires Mg(2+) as cofactor.

The protein localises to the mitochondrion. It carries out the reaction DNA(n) + a 2'-deoxyribonucleoside 5'-triphosphate = DNA(n+1) + diphosphate. Its activity is regulated as follows. Stimulated by KCl, and inhibited by the small molecules o 2',3'-dideoxythymidine 5'-triphosphate (d2TTP) and N-ethylmaleimide (NEM). As the catalytic component of the DNA polymerase gamma complex is involved in the replication of mitochondrial DNA (mtDNA). Has both 5'-3' DNA polymerase and a highly mispair-specific 3'-5' exonuclease activity. At the end of mtDNA replication DNA ends are ligated to produce a closed circular mtDNA molecule, its exonuclease activity is required for formation of these ligatable ends by preventing DNA synthesis from continuing past the 5'-end of downstream DNA into duplex DNA regions. Does not possess DNA primase activity, does not catalyze strand displacement synthesis and does not contain a 5'-3' exonuclease activity to catalyze nick translation. Important for promoting the elimination of paternal mitochondrial DNA during spermatogenesis, however its exact role in this function has not yet been identified and appears to be independent of its 3'-5'-exonuclease activity and only partially dependent on its DNA polymerase activity. This is DNA polymerase subunit gamma-1, mitochondrial from Drosophila melanogaster (Fruit fly).